We begin with the raw amino-acid sequence, 262 residues long: Small ribosomal subunit protein eS1 (262 aa).

Positions 235–253 (HGDGKGSDEPGAKVSRPEA) are enriched in basic and acidic residues. The disordered stretch occupies residues 235 to 262 (HGDGKGSDEPGAKVSRPEAYEPPVQESV).

Belongs to the eukaryotic ribosomal protein eS1 family. In terms of assembly, component of the small ribosomal subunit. Mature ribosomes consist of a small (40S) and a large (60S) subunit. The 40S subunit contains about 33 different proteins and 1 molecule of RNA (18S). The 60S subunit contains about 49 different proteins and 3 molecules of RNA (28S, 5.8S and 5S).

It localises to the cytoplasm. This chain is Small ribosomal subunit protein eS1, found in Triatoma infestans (Assassin bug).